The chain runs to 1021 residues: Nonribosomal peptide synthetase asaC (1021 aa).

The tract at residues 17-418 is adenylation (A) domain; it reads RHHVRTSPNA…ARADNMVKIR (402 aa). The region spanning 528–603 is the Carrier domain; that stretch reads KDAGDSVTWL…GLASVIDAGH (76 aa). Ser-563 is subject to O-(pantetheine 4'-phosphoryl)serine. The short-chain dehydrogenase/reductase (R) domain stretch occupies residues 646–888; sequence LTGATGFLGT…MIPVDFITTA (243 aa).

Belongs to the NRP synthetase family.

It participates in secondary metabolite biosynthesis. Its function is as follows. Nonribosomal peptide synthetase; part of the gene cluster that mediates the biosynthesis of aspergillic acid, a hydroxamic acid-containing pyrazinone with aliphatic side chains that originates from leucine (Leu) and isoleucine (Ile). Aspergillic acid has antibiotic properties and was shown to be lethal to mice. The first step in the pathway is the production of deoxyaspergillic acid via a condensation between the Ile amine and the Leu carboxylic acid, followed by a reductive release from the protein forming the dipeptide aldehyde NH(2)-Leu-Ile-CHO, which could undergo an intermolecular cyclization resulting in a dihydropyrazinone. As the NRPS asaC lacks a condensation domain, it is improbable that it is responsible for condensation of Leu and Ile. One possibility is that asaC acts on a previously condensed dipeptide and functions as a Leu-Ile reductase to yield deoxyaspergillic acid. After asaC forms deoxyaspergillic acid, the cytochrome P450 asaD oxidizes the pyrazinone to the hydroxamic acid-containing bioactive metabolite aspergillic acid. The hydroxylase/desaturase asaB can then convert aspergillic acid to hydroxyaspergillic acid. Both aspergillic acid and hydroxyaspergillic acid can form complexes with iron producing ferriaspergillin analogs. This is Nonribosomal peptide synthetase asaC from Aspergillus flavus (strain ATCC 200026 / FGSC A1120 / IAM 13836 / NRRL 3357 / JCM 12722 / SRRC 167).